Consider the following 108-residue polypeptide: UPF0145 protein sll118 (108 aa).

The protein belongs to the UPF0145 family.

The sequence is that of UPF0145 protein sll118 from Synechocystis sp. (strain ATCC 27184 / PCC 6803 / Kazusa).